The sequence spans 122 residues: Large ribosomal subunit protein uL14 (122 aa).

Belongs to the universal ribosomal protein uL14 family. In terms of assembly, part of the 50S ribosomal subunit. Forms a cluster with proteins L3 and L19. In the 70S ribosome, L14 and L19 interact and together make contacts with the 16S rRNA in bridges B5 and B8.

Functionally, binds to 23S rRNA. Forms part of two intersubunit bridges in the 70S ribosome. This Micrococcus luteus (Micrococcus lysodeikticus) protein is Large ribosomal subunit protein uL14.